Reading from the N-terminus, the 763-residue chain is Phosphoglycerol transferase I (763 aa).

The next 4 membrane-spanning stretches (helical) occupy residues 1-21 (MSELLSFALFLASVLIYAWKA), 26-46 (WWFAATLTVLGLFVVLNITLY), 77-97 (ILPGVGIVLALTAVFVSLGWI), and 108-128 (FGYSLLALLLALGSVDASPAF).

This sequence belongs to the OpgB family.

It is found in the cell inner membrane. The catalysed reaction is a phosphatidylglycerol + a membrane-derived-oligosaccharide D-glucose = a 1,2-diacyl-sn-glycerol + a membrane-derived-oligosaccharide 6-(glycerophospho)-D-glucose.. It functions in the pathway glycan metabolism; osmoregulated periplasmic glucan (OPG) biosynthesis. Transfers a phosphoglycerol residue from phosphatidylglycerol to the membrane-bound nascent glucan backbones. In Escherichia fergusonii (strain ATCC 35469 / DSM 13698 / CCUG 18766 / IAM 14443 / JCM 21226 / LMG 7866 / NBRC 102419 / NCTC 12128 / CDC 0568-73), this protein is Phosphoglycerol transferase I.